A 192-amino-acid polypeptide reads, in one-letter code: CASP-like protein 1E1 (192 aa).

Residues 1–22 (MDSQNKNSVDAMDGIESRGMKE) form a disordered region. Residues 1-29 (MDSQNKNSVDAMDGIESRGMKERGGRTNS) lie on the Cytoplasmic side of the membrane. A helical transmembrane segment spans residues 30–50 (FLVLRVLAFVLTSTAAIVHGV). The Extracellular portion of the chain corresponds to 51–81 (NNQTETVPIQLTSSMPPLYVPVVAKWHYLSA). Asparagine 52 is a glycosylation site (N-linked (GlcNAc...) asparagine). Residues 82–102 (FVFFVVSNAIACSYAAISVML) form a helical membrane-spanning segment. At 103-118 (SFCGKKSMVPIILTLD) the chain is on the cytoplasmic side. Residues 119 to 139 (LLMVALLFSSNGAATAIGVMG) traverse the membrane as a helical segment. The Extracellular segment spans residues 140-161 (YKGNSHVKWNKVCNVFGKFCNQ). A helical membrane pass occupies residues 162–182 (VAASVVLSLIGSIVFVLLVML). Over 183–192 (TAFRLHNKSK) the chain is Cytoplasmic.

The protein belongs to the Casparian strip membrane proteins (CASP) family. Homodimer and heterodimers.

The protein localises to the cell membrane. The sequence is that of CASP-like protein 1E1 from Ricinus communis (Castor bean).